Consider the following 534-residue polypeptide: Cytochrome c oxidase subunit 1 (534 aa).

A helical membrane pass occupies residues 16 to 36 (VLYFIFSVFCGMAGTGMSMII). 2 residues coordinate Ca(2+): Glu39 and Gly44. Residue His62 coordinates Fe(II)-heme a. The next 6 membrane-spanning stretches (helical) occupy residues 64–84 (ILMVFFLVMPALIGGFGNYLL), 101–121 (ISFWLLPPALVCLVTSTLVES), 147–167 (AIFALHMTSISSLLGAINFIV), 183–203 (PLFVWAIFITAFLLLLSLPVL), 235–255 (LFWFFGHPEVYIMIVPAFGVI), and 267–287 (VFGEISMVYAMASIGLLGFLV). His241 is a Cu cation binding site. The segment at residues 241–245 (HPEVY) is a cross-link (1'-histidyl-3'-tyrosine (His-Tyr)). Tyr245 lines the O2 pocket. Cu cation contacts are provided by His290 and His291. 2 helical membrane passes run 310–330 (MIIAIPTGIKIFSWLATIYGG) and 338–358 (MMYAIAFLFLFTLGGFTGVAL). Residues His368 and Asp369 each coordinate Mg(2+). 2 consecutive transmembrane segments (helical) span residues 372-392 (YVVAHFHYVLSMGAVFSMFAG) and 414-434 (FWLIFVGVNVIFLPMHFLGIN). His376 provides a ligand contact to heme a3. His378 contributes to the Fe(II)-heme a binding site. Position 441 (Pro441) interacts with Ca(2+). A helical membrane pass occupies residues 453 to 473 (VSSIGSFIAMISLILFIYILF).

This sequence belongs to the heme-copper respiratory oxidase family. Component of the cytochrome c oxidase (complex IV, CIV), a multisubunit enzyme composed of a catalytic core of 3 subunits and several supernumerary subunits. The complex exists as a monomer or a dimer and forms supercomplexes (SCs) in the inner mitochondrial membrane with ubiquinol-cytochrome c oxidoreductase (cytochrome b-c1 complex, complex III, CIII). The cofactor is heme. Cu cation serves as cofactor.

Its subcellular location is the mitochondrion inner membrane. It catalyses the reaction 4 Fe(II)-[cytochrome c] + O2 + 8 H(+)(in) = 4 Fe(III)-[cytochrome c] + 2 H2O + 4 H(+)(out). It functions in the pathway energy metabolism; oxidative phosphorylation. In terms of biological role, component of the cytochrome c oxidase, the last enzyme in the mitochondrial electron transport chain which drives oxidative phosphorylation. The respiratory chain contains 3 multisubunit complexes succinate dehydrogenase (complex II, CII), ubiquinol-cytochrome c oxidoreductase (cytochrome b-c1 complex, complex III, CIII) and cytochrome c oxidase (complex IV, CIV), that cooperate to transfer electrons derived from NADH and succinate to molecular oxygen, creating an electrochemical gradient over the inner membrane that drives transmembrane transport and the ATP synthase. Cytochrome c oxidase is the component of the respiratory chain that catalyzes the reduction of oxygen to water. Electrons originating from reduced cytochrome c in the intermembrane space (IMS) are transferred via the dinuclear copper A center (CU(A)) of subunit 2 and heme A of subunit 1 to the active site in subunit 1, a binuclear center (BNC) formed by heme A3 and copper B (CU(B)). The BNC reduces molecular oxygen to 2 water molecules using 4 electrons from cytochrome c in the IMS and 4 protons from the mitochondrial matrix. The chain is Cytochrome c oxidase subunit 1 (COX1) from Vanderwaltozyma polyspora (strain ATCC 22028 / DSM 70294 / BCRC 21397 / CBS 2163 / NBRC 10782 / NRRL Y-8283 / UCD 57-17) (Kluyveromyces polysporus).